The primary structure comprises 417 residues: Serine hydroxymethyltransferase (417 aa).

(6S)-5,6,7,8-tetrahydrofolate is bound by residues Leu-121 and 125-127 (GHL). At Lys-229 the chain carries N6-(pyridoxal phosphate)lysine. 355 to 357 (SPF) lines the (6S)-5,6,7,8-tetrahydrofolate pocket.

This sequence belongs to the SHMT family. As to quaternary structure, homodimer. Pyridoxal 5'-phosphate serves as cofactor.

The protein localises to the cytoplasm. It carries out the reaction (6R)-5,10-methylene-5,6,7,8-tetrahydrofolate + glycine + H2O = (6S)-5,6,7,8-tetrahydrofolate + L-serine. It functions in the pathway one-carbon metabolism; tetrahydrofolate interconversion. It participates in amino-acid biosynthesis; glycine biosynthesis; glycine from L-serine: step 1/1. In terms of biological role, catalyzes the reversible interconversion of serine and glycine with tetrahydrofolate (THF) serving as the one-carbon carrier. This reaction serves as the major source of one-carbon groups required for the biosynthesis of purines, thymidylate, methionine, and other important biomolecules. Also exhibits THF-independent aldolase activity toward beta-hydroxyamino acids, producing glycine and aldehydes, via a retro-aldol mechanism. The chain is Serine hydroxymethyltransferase from Erwinia tasmaniensis (strain DSM 17950 / CFBP 7177 / CIP 109463 / NCPPB 4357 / Et1/99).